The sequence spans 531 residues: Fatty acid--[acyl-carrier-protein] ligase MmaC (531 aa).

Thr169 contacts Mg(2+). ATP contacts are provided by Ile218, Val308, and Ser312. Mg(2+) is bound at residue Glu313. Asp403 provides a ligand contact to ATP.

The protein belongs to the ATP-dependent AMP-binding enzyme family. Mg(2+) is required as a cofactor.

It carries out the reaction a (2E)-enoyl fatty acid + holo-[ACP] + ATP = a (2E)-enoyl-[ACP] + AMP + diphosphate. The catalysed reaction is a (2E)-enoyl fatty acid + ATP + H(+) = a (2E)-2-fatty-enoyl-AMP + diphosphate. It catalyses the reaction a (2E)-2-fatty-enoyl-AMP + holo-[ACP] = a (2E)-enoyl-[ACP] + AMP + H(+). The enzyme catalyses (2E)-decenoate + holo-[ACP] + ATP = (2E)-decenoyl-[ACP] + AMP + diphosphate. It carries out the reaction a (3R)-3-isocyanyl-fatty acid + holo-[ACP] + ATP = a (3R)-3-isocyanyl-fatty acyl-[ACP] + AMP + diphosphate. The catalysed reaction is a (3R)-3-isocyanyl-fatty acid + ATP + H(+) = a (3R)-3-isocyanyl-fatty acyl-AMP + diphosphate. It catalyses the reaction a (3R)-3-isocyanyl-fatty acyl-AMP + holo-[ACP] = a (3R)-3-isocyanyl-fatty acyl-[ACP] + AMP + H(+). Its function is as follows. Acyl:acyl-carrier protein ligase involved in the biosynthesis of a unique class of isonitrile lipopeptides (INLPs) that seem to play a role in metal acquisition in M.marinum. Acts twice during the INLP pathway, catalyzing the activation of (2E)-2-decenoate as well as probably the corresponding (3R)-3-isocyanyl-fatty acid as acyl-adenylates (acyl-AMP), and then the acyl transfer to the dedicated acyl-carrier protein MmaB. In Mycobacterium marinum (strain ATCC BAA-535 / M), this protein is Fatty acid--[acyl-carrier-protein] ligase MmaC.